We begin with the raw amino-acid sequence, 424 residues long: Gamma-glutamyl phosphate reductase (424 aa).

The protein belongs to the gamma-glutamyl phosphate reductase family.

Its subcellular location is the cytoplasm. It catalyses the reaction L-glutamate 5-semialdehyde + phosphate + NADP(+) = L-glutamyl 5-phosphate + NADPH + H(+). The protein operates within amino-acid biosynthesis; L-proline biosynthesis; L-glutamate 5-semialdehyde from L-glutamate: step 2/2. Functionally, catalyzes the NADPH-dependent reduction of L-glutamate 5-phosphate into L-glutamate 5-semialdehyde and phosphate. The product spontaneously undergoes cyclization to form 1-pyrroline-5-carboxylate. The sequence is that of Gamma-glutamyl phosphate reductase from Shewanella woodyi (strain ATCC 51908 / MS32).